The sequence spans 143 residues: Transcriptional regulator MraZ (143 aa).

2 SpoVT-AbrB domains span residues 5-47 (EFRH…PMNE) and 76-119 (ASEC…SQEK).

The protein belongs to the MraZ family. Forms oligomers.

The protein resides in the cytoplasm. The protein localises to the nucleoid. This is Transcriptional regulator MraZ from Natranaerobius thermophilus (strain ATCC BAA-1301 / DSM 18059 / JW/NM-WN-LF).